The primary structure comprises 461 residues: Demethyllactenocin mycarosyltransferase (461 aa).

The tract at residues 1 to 21 (MAGLRPGAGVPPGTPWPISPG) is disordered.

This sequence belongs to the UDP-glycosyltransferase family.

It catalyses the reaction dTDP-beta-L-mycarose + demethyllactenocin = demethylmacrocin + dTDP + H(+). Involved in the biosynthesis of mycarose which is a 6-deoxyhexose sugar required during production of the macrolide antibiotic tylosin. Catalyzes the transfer of L-mycarosyl from dTDP-beta-L-mycarose to demethyllactenocin to yield demethylmacrocin. The sequence is that of Demethyllactenocin mycarosyltransferase (tylCV) from Streptomyces fradiae (Streptomyces roseoflavus).